A 478-amino-acid chain; its full sequence is Geranial dehydrogenase (478 aa).

230–235 (GSTSAG) contacts NAD(+). The active-site Proton acceptor is the glutamate 252. The active-site Nucleophile is cysteine 286.

It belongs to the aldehyde dehydrogenase family.

It carries out the reaction (2E)-geranial + NAD(+) + H2O = geranate + NADH + 2 H(+). It catalyses the reaction perillyl aldehyde + NAD(+) + H2O = perillate + NADH + 2 H(+). The protein operates within terpene metabolism; monoterpene degradation. Its function is as follows. Involved in the degradation of the monoterpenes beta-myrcene and limonene. During anaerobic degradation of beta-myrcene, catalyzes the NAD(+)-dependent oxidation of geranial to geranic acid. Seems to be specific for the trans-isomer geranial, since it does not act on the cis-isomer neral. During degradation of limonene, catalyzes the NAD(+)-dependent conversion of perillyl aldehyde to perrilic acid. This is Geranial dehydrogenase from Castellaniella defragrans (strain DSM 12143 / CCUG 39792 / 65Phen) (Alcaligenes defragrans).